Consider the following 188-residue polypeptide: 3-deoxy-D-manno-octulosonate 8-phosphate phosphatase KdsC (188 aa).

Mg(2+)-binding residues include aspartate 32 and aspartate 34. Substrate-binding positions include aspartate 34, 55–59, arginine 63, arginine 78, arginine 86, and lysine 102; that span reads NVRDG. Aspartate 125 contributes to the Mg(2+) binding site.

The protein belongs to the KdsC family. In terms of assembly, homotetramer. Requires Mg(2+) as cofactor.

It catalyses the reaction 3-deoxy-alpha-D-manno-2-octulosonate-8-phosphate + H2O = 3-deoxy-alpha-D-manno-oct-2-ulosonate + phosphate. It participates in carbohydrate biosynthesis; 3-deoxy-D-manno-octulosonate biosynthesis; 3-deoxy-D-manno-octulosonate from D-ribulose 5-phosphate: step 3/3. The protein operates within bacterial outer membrane biogenesis; lipopolysaccharide biosynthesis. Its function is as follows. Catalyzes the hydrolysis of 3-deoxy-D-manno-octulosonate 8-phosphate (KDO 8-P) to 3-deoxy-D-manno-octulosonate (KDO) and inorganic phosphate. This Escherichia coli (strain K12) protein is 3-deoxy-D-manno-octulosonate 8-phosphate phosphatase KdsC.